A 241-amino-acid polypeptide reads, in one-letter code: Carboxy-S-adenosyl-L-methionine synthase (241 aa).

S-adenosyl-L-methionine contacts are provided by residues Tyr-38, 63–65 (GCS), 88–89 (DN), 116–117 (DI), Asn-131, and Arg-198.

It belongs to the class I-like SAM-binding methyltransferase superfamily. Cx-SAM synthase family. Homodimer.

It carries out the reaction prephenate + S-adenosyl-L-methionine = carboxy-S-adenosyl-L-methionine + 3-phenylpyruvate + H2O. In terms of biological role, catalyzes the conversion of S-adenosyl-L-methionine (SAM) to carboxy-S-adenosyl-L-methionine (Cx-SAM). In Haemophilus influenzae (strain PittEE), this protein is Carboxy-S-adenosyl-L-methionine synthase.